The sequence spans 88 residues: UPF0297 protein LAR_0520 (88 aa).

This sequence belongs to the UPF0297 family.

The chain is UPF0297 protein LAR_0520 from Limosilactobacillus reuteri subsp. reuteri (strain JCM 1112) (Lactobacillus reuteri).